The chain runs to 59 residues: Large ribosomal subunit protein bL32 (59 aa).

Residues 1–22 (MAVQQNKKSPSKRGMHRSHDFL) are disordered.

Belongs to the bacterial ribosomal protein bL32 family.

The chain is Large ribosomal subunit protein bL32 from Thiobacillus denitrificans (strain ATCC 25259 / T1).